The sequence spans 154 residues: Prefoldin subunit 2 (154 aa).

Gly residues predominate over residues 1–18; that stretch reads MAENGGRAGKSSGSGTGK. Disordered stretches follow at residues 1–20 and 124–154; these read MAEN…GKGA and IRLM…VLVS. Over residues 124–139 the composition is skewed to basic and acidic residues; it reads IRLMGEDEKPAAKENS. The segment covering 140–154 has biased composition (low complexity); sequence EGAGAKASSAGVLVS.

The protein belongs to the prefoldin subunit beta family. As to quaternary structure, heterohexamer of two PFD-alpha type and four PFD-beta type subunits. Component of the PAQosome complex which is responsible for the biogenesis of several protein complexes and which consists of R2TP complex members RUVBL1, RUVBL2, RPAP3 and PIH1D1, URI complex members PFDN2, PFDN6, PDRG1, UXT and URI1 as well as ASDURF, POLR2E and DNAAF10/WDR92. Interacts with URI1; the interaction is phosphorylation-dependent and occurs in a growth-dependent manner.

The protein resides in the nucleus. Its subcellular location is the cytoplasm. It is found in the mitochondrion. Its function is as follows. Binds specifically to cytosolic chaperonin (c-CPN) and transfers target proteins to it. Binds to nascent polypeptide chain and promotes folding in an environment in which there are many competing pathways for nonnative proteins. In Bos taurus (Bovine), this protein is Prefoldin subunit 2 (PFDN2).